The chain runs to 305 residues: UDP-N-acetylenolpyruvoylglucosamine reductase (305 aa).

Residues 33–198 (RVGGPAQVLF…TGGTFRGRRA (166 aa)) enclose the FAD-binding PCMH-type domain. Arginine 178 is a catalytic residue. The active-site Proton donor is the serine 227. Glutamate 297 is an active-site residue.

Belongs to the MurB family. FAD is required as a cofactor.

Its subcellular location is the cytoplasm. The catalysed reaction is UDP-N-acetyl-alpha-D-muramate + NADP(+) = UDP-N-acetyl-3-O-(1-carboxyvinyl)-alpha-D-glucosamine + NADPH + H(+). The protein operates within cell wall biogenesis; peptidoglycan biosynthesis. Functionally, cell wall formation. This is UDP-N-acetylenolpyruvoylglucosamine reductase from Nitrobacter hamburgensis (strain DSM 10229 / NCIMB 13809 / X14).